Reading from the N-terminus, the 164-residue chain is Transcription elongation factor GreA (164 aa).

This sequence belongs to the GreA/GreB family.

Its function is as follows. Necessary for efficient RNA polymerase transcription elongation past template-encoded arresting sites. The arresting sites in DNA have the property of trapping a certain fraction of elongating RNA polymerases that pass through, resulting in locked ternary complexes. Cleavage of the nascent transcript by cleavage factors such as GreA or GreB allows the resumption of elongation from the new 3'terminus. GreA releases sequences of 2 to 3 nucleotides. This is Transcription elongation factor GreA from Helicobacter acinonychis (strain Sheeba).